A 968-amino-acid chain; its full sequence is Insulin receptor substrate 1 (968 aa).

The PH domain maps to 8 to 109 (GMALSGYLKK…WLDKLLVLQR (102 aa)). The 115-residue stretch at 122 to 236 (YDHVWQVVIQ…SAMSAKTESN (115 aa)) folds into the IRS-type PTB domain. Residues 248–269 (DLSHEPMRKRSSSANEASKPIN) are disordered. Phosphoserine occurs at positions 286 and 287. The segment covering 304–329 (RNGTLSESSNQTYFGSNHGLRSNTIS) has biased composition (polar residues). Residues 304–370 (RNGTLSESSN…VDESDDNGSF (67 aa)) are disordered. Phosphoserine is present on S342. A Phosphotyrosine; by INSR modification is found at Y411. Residues 411–414 (YIPM) carry the YXXM motif 1 motif. The tract at residues 528 to 555 (TANRSQSSITKEGTSYGSSANRQKKSTS) is disordered. Residues 529–555 (ANRSQSSITKEGTSYGSSANRQKKSTS) are compositionally biased toward polar residues. S555 bears the Phosphoserine mark. Positions 641-644 (YLEM) match the YXXM motif 2 motif. Residues 697–711 (EKWREQPSRSEEKKS) show a composition bias toward basic and acidic residues. The tract at residues 697–739 (EKWREQPSRSEEKKSNSPLNDNTFSSKPTNVESTSKSHDVHSA) is disordered. A compositionally biased stretch (polar residues) spans 712–730 (NSPLNDNTFSSKPTNVEST). At Y911 the chain carries Phosphotyrosine; by INSR. The segment at 922–968 (QNPAKYLKRGSRESPPVSACPEDGNTYAKIDFDQSDSSSSSSNIFNT) is disordered. 2 positions are modified to phosphoserine: S932 and S935. The residue at position 948 (Y948) is a Phosphotyrosine; by INSR. Residues 956–968 (SDSSSSSSNIFNT) are compositionally biased toward low complexity.

As to quaternary structure, bindings to phosphatidylinositol 3-kinase and SHP2.

Activates phosphatidylinositol 3-kinase when bound to the regulatory p85 subunit. May mediate the control of various cellular processes by insulin-like peptides. When phosphorylated by the insulin receptor binds specifically to various cellular proteins containing SH2 domains. Involved in control of cell proliferation, cell size, and body and organ growth throughout development. Also has a role in a signaling pathway controlling the physiological response required to endure periods of low nutrient conditions. Insulin/insulin-like growth factor (IGF) signaling pathway has a role in regulating aging and is necessary in the ovary for vitellogenic maturation. The polypeptide is Insulin receptor substrate 1 (chico) (Drosophila melanogaster (Fruit fly)).